Here is a 342-residue protein sequence, read N- to C-terminus: Fructose-1,6-bisphosphatase class 1 (342 aa).

Residues E91, D113, L115, and D116 each coordinate Mg(2+). Residues 116–119 (DGSS), N211, and K277 contribute to the substrate site. E283 contacts Mg(2+).

This sequence belongs to the FBPase class 1 family. Homotetramer. Mg(2+) serves as cofactor.

The protein localises to the cytoplasm. It carries out the reaction beta-D-fructose 1,6-bisphosphate + H2O = beta-D-fructose 6-phosphate + phosphate. It participates in carbohydrate biosynthesis; gluconeogenesis. This Bordetella petrii (strain ATCC BAA-461 / DSM 12804 / CCUG 43448) protein is Fructose-1,6-bisphosphatase class 1.